The chain runs to 170 residues: Adenine phosphoribosyltransferase (170 aa).

It belongs to the purine/pyrimidine phosphoribosyltransferase family. In terms of assembly, homodimer.

Its subcellular location is the cytoplasm. The enzyme catalyses AMP + diphosphate = 5-phospho-alpha-D-ribose 1-diphosphate + adenine. It participates in purine metabolism; AMP biosynthesis via salvage pathway; AMP from adenine: step 1/1. Its function is as follows. Catalyzes a salvage reaction resulting in the formation of AMP, that is energically less costly than de novo synthesis. The polypeptide is Adenine phosphoribosyltransferase (Brevibacillus brevis (strain 47 / JCM 6285 / NBRC 100599)).